The sequence spans 414 residues: Serine hydroxymethyltransferase (414 aa).

(6S)-5,6,7,8-tetrahydrofolate-binding positions include Leu117 and 121–123; that span reads GHL. Lys226 bears the N6-(pyridoxal phosphate)lysine mark. 349–351 is a binding site for (6S)-5,6,7,8-tetrahydrofolate; that stretch reads SPF.

This sequence belongs to the SHMT family. Homodimer. Requires pyridoxal 5'-phosphate as cofactor.

It localises to the cytoplasm. The enzyme catalyses (6R)-5,10-methylene-5,6,7,8-tetrahydrofolate + glycine + H2O = (6S)-5,6,7,8-tetrahydrofolate + L-serine. The protein operates within one-carbon metabolism; tetrahydrofolate interconversion. Its pathway is amino-acid biosynthesis; glycine biosynthesis; glycine from L-serine: step 1/1. Catalyzes the reversible interconversion of serine and glycine with tetrahydrofolate (THF) serving as the one-carbon carrier. Also exhibits THF-independent aldolase activity toward beta-hydroxyamino acids, producing glycine and aldehydes, via a retro-aldol mechanism. In Methanospirillum hungatei JF-1 (strain ATCC 27890 / DSM 864 / NBRC 100397 / JF-1), this protein is Serine hydroxymethyltransferase.